A 434-amino-acid chain; its full sequence is Histidinol dehydrogenase (434 aa).

NAD(+) contacts are provided by Tyr-129, Gln-191, and Asn-214. Ser-240, Gln-262, and His-265 together coordinate substrate. The Zn(2+) site is built by Gln-262 and His-265. Active-site proton acceptor residues include Glu-329 and His-330. His-330, Asp-363, Glu-417, and His-422 together coordinate substrate. Asp-363 is a Zn(2+) binding site. His-422 contributes to the Zn(2+) binding site.

It belongs to the histidinol dehydrogenase family. Zn(2+) is required as a cofactor.

It catalyses the reaction L-histidinol + 2 NAD(+) + H2O = L-histidine + 2 NADH + 3 H(+). The protein operates within amino-acid biosynthesis; L-histidine biosynthesis; L-histidine from 5-phospho-alpha-D-ribose 1-diphosphate: step 9/9. Catalyzes the sequential NAD-dependent oxidations of L-histidinol to L-histidinaldehyde and then to L-histidine. The chain is Histidinol dehydrogenase from Colwellia psychrerythraea (strain 34H / ATCC BAA-681) (Vibrio psychroerythus).